A 150-amino-acid chain; its full sequence is Myosin, essential light chain (150 aa).

EF-hand domains follow at residues 3–38 (ASADQIQECFSIFDKDNDGKVSVEDIGACLRSLGKS) and 75–110 (EQQKEMLDAFKALDKEGHGTIQGAELRQLLTTLGDY). Ca(2+) is bound by residues D16, D18, D20, K22, and D27.

As to quaternary structure, myosin is a hexamer of 2 heavy chains and 4 light chains (two regulatory light chains and two essential light chains).

The protein is Myosin, essential light chain (mlcE) of Dictyostelium discoideum (Social amoeba).